A 378-amino-acid chain; its full sequence is Odorant receptor Or2 (378 aa).

Position 1 (M1) is a topological domain, cytoplasmic. A helical transmembrane segment spans residues 2-22; it reads LIEECPIIGVNVRVWLFWSYL. At 23–29 the chain is on the extracellular side; sequence RRPRLSR. Residues 30–50 traverse the membrane as a helical segment; the sequence is FLVGCIPVAVLNVFQFLKLYS. Topologically, residues 51–59 are cytoplasmic; sequence SWGDMSELI. A helical transmembrane segment spans residues 60–80; sequence INGYFTVLYFNLVLRTSFLVI. The Extracellular portion of the chain corresponds to 81-120; the sequence is NRRKFETFFEGVAAEYALLEKNDDIRPVLERYTRRGRMLS. Residues 121 to 141 traverse the membrane as a helical segment; it reads ISNLWLGAFISACFVTYPLFV. Residues 142 to 164 lie on the Cytoplasmic side of the membrane; sequence PGRGLPYGVTIPGVDVLATPTYQ. The helical transmembrane segment at 165–185 threads the bilayer; the sequence is VVFVLQVYLTFPACCMYIPFT. At 186–254 the chain is on the extracellular side; the sequence is SFYATCTLFA…HDLNSLVTHL (69 aa). Residues 255-275 traverse the membrane as a helical segment; it reads CLLEFLSFGMMLCALLFLLSI. Residues 276–278 lie on the Cytoplasmic side of the membrane; the sequence is SNQ. Residues 279-299 traverse the membrane as a helical segment; the sequence is LAQMIMIGSYIFMILSQMFAF. Residues 300–378 are Extracellular-facing; that stretch reads YWHANEVLEQ…YFTLLRRVYN (79 aa). A glycan (N-linked (GlcNAc...) asparagine) is linked at N364.

This sequence belongs to the insect chemoreceptor superfamily. Heteromeric odorant receptor channel (TC 1.A.69) family. Or30a subfamily. As to expression, expressed in male and female antennae and maxillary palps.

The protein localises to the cell membrane. Functionally, odorant receptor which plays a critical role in the anthropophilic host-seeking behavior; establishes the host preference to transmit malaria. The protein is Odorant receptor Or2 (OR2) of Anopheles gambiae (African malaria mosquito).